Consider the following 120-residue polypeptide: MFYWILLALAIIAEITGTLSMKWASVSGGHTGFILMLAMIALSYIFLAFAVKKIALGVAYALWEGIGILLITLFSVLLFDESLSLLKIAGLTTLVIGIVLIKSGTQKKASSKQEVAHAAV.

4 consecutive transmembrane segments (helical) span residues 1–21, 31–51, 54–74, and 81–101; these read MFYW…TLSM, TGFI…AFAV, IALG…ITLF, and ESLS…IVLI.

The protein belongs to the drug/metabolite transporter (DMT) superfamily. Small multidrug resistance (SMR) (TC 2.A.7.1) family. MdtJ subfamily. Forms a complex with MdtI.

The protein resides in the cell inner membrane. Its function is as follows. Catalyzes the excretion of spermidine. The chain is Spermidine export protein MdtJ from Klebsiella pneumoniae subsp. pneumoniae (strain ATCC 700721 / MGH 78578).